We begin with the raw amino-acid sequence, 239 residues long: tRNA (guanine-N(1)-)-methyltransferase (239 aa).

S-adenosyl-L-methionine-binding positions include Gly-110 and 130-135 (VGDYVL).

Belongs to the RNA methyltransferase TrmD family. As to quaternary structure, homodimer.

The protein resides in the cytoplasm. It catalyses the reaction guanosine(37) in tRNA + S-adenosyl-L-methionine = N(1)-methylguanosine(37) in tRNA + S-adenosyl-L-homocysteine + H(+). Specifically methylates guanosine-37 in various tRNAs. This Borrelia hermsii (strain HS1 / DAH) protein is tRNA (guanine-N(1)-)-methyltransferase.